The chain runs to 750 residues: 1,4-alpha-glucan branching enzyme GlgB (750 aa).

Asp-425 serves as the catalytic Nucleophile. Glu-478 functions as the Proton donor in the catalytic mechanism.

It belongs to the glycosyl hydrolase 13 family. GlgB subfamily. As to quaternary structure, monomer.

It catalyses the reaction Transfers a segment of a (1-&gt;4)-alpha-D-glucan chain to a primary hydroxy group in a similar glucan chain.. It participates in glycan biosynthesis; glycogen biosynthesis. Catalyzes the formation of the alpha-1,6-glucosidic linkages in glycogen by scission of a 1,4-alpha-linked oligosaccharide from growing alpha-1,4-glucan chains and the subsequent attachment of the oligosaccharide to the alpha-1,6 position. In Cupriavidus pinatubonensis (strain JMP 134 / LMG 1197) (Cupriavidus necator (strain JMP 134)), this protein is 1,4-alpha-glucan branching enzyme GlgB.